We begin with the raw amino-acid sequence, 460 residues long: Telomere-binding protein homolog (460 aa).

The protein belongs to the telombin family.

The protein resides in the nucleus. The protein localises to the chromosome. Its subcellular location is the telomere. May bind telomeric T4G4 sequences. This chain is Telomere-binding protein homolog, found in Euplotes crassus.